The primary structure comprises 92 residues: Large ribosomal subunit protein bL25 (92 aa).

Belongs to the bacterial ribosomal protein bL25 family. In terms of assembly, part of the 50S ribosomal subunit; part of the 5S rRNA/L5/L18/L25 subcomplex. Contacts the 5S rRNA. Binds to the 5S rRNA independently of L5 and L18.

Its function is as follows. This is one of the proteins that binds to the 5S RNA in the ribosome where it forms part of the central protuberance. The protein is Large ribosomal subunit protein bL25 of Aliivibrio fischeri (strain ATCC 700601 / ES114) (Vibrio fischeri).